The following is a 199-amino-acid chain: ATP-dependent Clp protease proteolytic subunit (199 aa).

The disordered stretch occupies residues 1 to 23 (MTTSAARKGLRTRGSACPRATRS). Ser100 acts as the Nucleophile in catalysis. His125 is a catalytic residue.

It belongs to the peptidase S14 family. In terms of assembly, fourteen ClpP subunits assemble into 2 heptameric rings which stack back to back to give a disk-like structure with a central cavity, resembling the structure of eukaryotic proteasomes.

It localises to the cytoplasm. The catalysed reaction is Hydrolysis of proteins to small peptides in the presence of ATP and magnesium. alpha-casein is the usual test substrate. In the absence of ATP, only oligopeptides shorter than five residues are hydrolyzed (such as succinyl-Leu-Tyr-|-NHMec, and Leu-Tyr-Leu-|-Tyr-Trp, in which cleavage of the -Tyr-|-Leu- and -Tyr-|-Trp bonds also occurs).. Its function is as follows. Cleaves peptides in various proteins in a process that requires ATP hydrolysis. Has a chymotrypsin-like activity. Plays a major role in the degradation of misfolded proteins. The polypeptide is ATP-dependent Clp protease proteolytic subunit (Paracoccus denitrificans).